We begin with the raw amino-acid sequence, 360 residues long: Histidinol-phosphate aminotransferase (360 aa).

Position 224 is an N6-(pyridoxal phosphate)lysine (lysine 224).

Belongs to the class-II pyridoxal-phosphate-dependent aminotransferase family. Histidinol-phosphate aminotransferase subfamily. Pyridoxal 5'-phosphate is required as a cofactor.

The enzyme catalyses L-histidinol phosphate + 2-oxoglutarate = 3-(imidazol-4-yl)-2-oxopropyl phosphate + L-glutamate. It participates in amino-acid biosynthesis; L-histidine biosynthesis; L-histidine from 5-phospho-alpha-D-ribose 1-diphosphate: step 7/9. This chain is Histidinol-phosphate aminotransferase, found in Methanococcoides burtonii (strain DSM 6242 / NBRC 107633 / OCM 468 / ACE-M).